We begin with the raw amino-acid sequence, 1517 residues long: DNA-directed RNA polymerase subunit beta' (1517 aa).

Residues Cys-71, Cys-73, Cys-86, and Cys-89 each coordinate Zn(2+). Mg(2+) is bound by residues Asp-482, Asp-484, and Asp-486. Positions 812, 886, 893, and 896 each coordinate Zn(2+).

It belongs to the RNA polymerase beta' chain family. The RNAP catalytic core consists of 2 alpha, 1 beta, 1 beta' and 1 omega subunit. When a sigma factor is associated with the core the holoenzyme is formed, which can initiate transcription. Requires Mg(2+) as cofactor. The cofactor is Zn(2+).

The catalysed reaction is RNA(n) + a ribonucleoside 5'-triphosphate = RNA(n+1) + diphosphate. DNA-dependent RNA polymerase catalyzes the transcription of DNA into RNA using the four ribonucleoside triphosphates as substrates. The polypeptide is DNA-directed RNA polymerase subunit beta' (Campylobacter jejuni subsp. jejuni serotype O:6 (strain 81116 / NCTC 11828)).